A 434-amino-acid polypeptide reads, in one-letter code: Quinolone resistance transporter (434 aa).

12 helical membrane passes run 15–35 (LIPALVILYLVAYIDRAAVGF), 45–65 (GIGDAAYGLGAGLFFIGYFLF), 85–105 (ILLTWGLITMAMALIQGPKSF), 110–130 (FLLGVAEAGFFPGVLYLITQW), 142–162 (MFVLSQPIAMMIAGPLAGLLL), 175–195 (WLFVAVGLPAVLLALPTFLWL), 241–261 (VLLLALYYLPVTLSIYGLNLW), 275–295 (IQIGFLSSIPYIFGIIGLLII), 306–326 (YGHLSFLYALGACAMFLSGWL), 333–353 (LAALAVVAFCLFSSTAVFWTL), 367–387 (IALINSVGNLGGYVGPFGIGL), and 396–416 (AAGLYFLSIVMLFGLILTYIV).

It belongs to the major facilitator superfamily.

It is found in the cell inner membrane. Its function is as follows. Efflux pump that mediates resistance to quinolone-type antibiotics. The sequence is that of Quinolone resistance transporter from Acinetobacter baumannii.